The primary structure comprises 174 residues: Glutamyl-tRNA(Gln) amidotransferase subunit F, mitochondrial (174 aa).

It belongs to the GatF family. In terms of assembly, subunit of the heterotrimeric GatFAB amidotransferase (AdT) complex, composed of A, B and F subunits.

The protein localises to the mitochondrion inner membrane. It carries out the reaction L-glutamyl-tRNA(Gln) + L-glutamine + ATP + H2O = L-glutaminyl-tRNA(Gln) + L-glutamate + ADP + phosphate + H(+). Allows the formation of correctly charged Gln-tRNA(Gln) through the transamidation of misacylated Glu-tRNA(Gln) in the mitochondria. The reaction takes place in the presence of glutamine and ATP through an activated gamma-phospho-Glu-tRNA(Gln). Required for proper protein synthesis within the mitochondrion. The sequence is that of Glutamyl-tRNA(Gln) amidotransferase subunit F, mitochondrial from Kluyveromyces lactis (strain ATCC 8585 / CBS 2359 / DSM 70799 / NBRC 1267 / NRRL Y-1140 / WM37) (Yeast).